The following is a 166-amino-acid chain: uncharacterized protein (166 aa).

Helical transmembrane passes span 7-27 (VLFK…SLFY), 30-50 (FLFA…YCYI), 69-89 (IETL…KSLL), and 92-112 (NSFF…LVLF).

To M.jannaschii MJ0795.1 and MJ0785.1.

The protein localises to the cell membrane. This is an uncharacterized protein from Methanocaldococcus jannaschii (strain ATCC 43067 / DSM 2661 / JAL-1 / JCM 10045 / NBRC 100440) (Methanococcus jannaschii).